The sequence spans 445 residues: MSFRGIVQDLRDGFGSLSRRSFDFRLSSLHKGKAQGSSFREYSSSRDLLSPVIVQTSRWANLPPELLFDVIKRLEESESNWPARKHVVACASVCRSWRAMCQEIVLGPEICGKLTFPVSLKQPGPRDAMIQCFIKRDKSKLTFHLFLCLSPALLVENGKFLLSAKRTRRTTRTEYIISMDADNISRSSNSYLGKLRSNFLGTKFLVYDTQPPPNTSSSALITDRTSRSRFHSRRVSPKVPSGSYNIAQITYELNVLGTRGPRRMHCIMNSIPISSLEPGGSVPNQPEKLVPAPYSLDDSFRSNISFSKSSFDHRSLDFSSSRFSEMGISCDDNEEEASFRPLILKNKQPRWHEQLQCWCLNFRGRVTVASVKNFQLVAARQPQPQGTGAAAAPTSAPAHPEQDKVILQFGKVGKDMFTMDYRYPLSAFQAFAICLSSFDTKLACE.

The F-box domain occupies Ser57–Gly112. Low complexity predominate over residues Pro382–Ala398. Residues Pro382–Glu401 form a disordered region.

Belongs to the TUB family. Part of a SCF (ASK-cullin-F-box) protein ligase complex. Interacts with SKP1A/ASK1. In terms of tissue distribution, ubiquitous.

It is found in the nucleus. It functions in the pathway protein modification; protein ubiquitination. Its function is as follows. Component of SCF(ASK-cullin-F-box) E3 ubiquitin ligase complexes, which may mediate the ubiquitination and subsequent proteasomal degradation of target proteins. This chain is Tubby-like F-box protein 10, found in Arabidopsis thaliana (Mouse-ear cress).